Here is a 54-residue protein sequence, read N- to C-terminus: Conotoxin vc5c (54 aa).

The signal sequence occupies residues 1–14 (VILLLLIASIPSDA). A propeptide spanning residues 15–43 (VQLKTKDDMPLASFHGNARRTLQMLSNKR) is cleaved from the precursor. Position 50 is a 4-carboxyglutamate (Glu50). A 6'-bromotryptophan modification is found at Trp51.

The protein belongs to the conotoxin T superfamily. In terms of processing, contains 2 disulfide bonds that can be either 'C1-C3, C2-C4' or 'C1-C4, C2-C3', since these disulfide connectivities have been observed for conotoxins with cysteine framework V (for examples, see AC P0DQQ7 and AC P81755). As to expression, expressed by the venom duct.

The protein localises to the secreted. The protein is Conotoxin vc5c of Conus victoriae (Queen Victoria cone).